The following is a 445-amino-acid chain: Tubulin beta chain (445 aa).

The MREI motif motif lies at 1–4 (MREI). Q11, E69, S138, G142, T143, G144, N204, and N226 together coordinate GTP. E69 contributes to the Mg(2+) binding site. Positions 421-445 (EYQQYQDATAEEEGEGEEEGDEEVA) are disordered. The segment covering 429-445 (TAEEEGEGEEEGDEEVA) has biased composition (acidic residues). E438 is modified (5-glutamyl polyglutamate).

The protein belongs to the tubulin family. Dimer of alpha and beta chains. A typical microtubule is a hollow water-filled tube with an outer diameter of 25 nm and an inner diameter of 15 nM. Alpha-beta heterodimers associate head-to-tail to form protofilaments running lengthwise along the microtubule wall with the beta-tubulin subunit facing the microtubule plus end conferring a structural polarity. Microtubules usually have 13 protofilaments but different protofilament numbers can be found in some organisms and specialized cells. Mg(2+) is required as a cofactor. Post-translationally, some glutamate residues at the C-terminus are polyglycylated, resulting in polyglycine chains on the gamma-carboxyl group. Glycylation is mainly limited to tubulin incorporated into axonemes (cilia and flagella) whereas glutamylation is prevalent in neuronal cells, centrioles, axonemes, and the mitotic spindle. Both modifications can coexist on the same protein on adjacent residues, and lowering polyglycylation levels increases polyglutamylation, and reciprocally. The precise function of polyglycylation is still unclear. In terms of processing, some glutamate residues at the C-terminus are polyglutamylated, resulting in polyglutamate chains on the gamma-carboxyl group. Polyglutamylation plays a key role in microtubule severing by spastin (SPAST). SPAST preferentially recognizes and acts on microtubules decorated with short polyglutamate tails: severing activity by SPAST increases as the number of glutamates per tubulin rises from one to eight, but decreases beyond this glutamylation threshold. As to expression, brain.

The protein localises to the cytoplasm. The protein resides in the cytoskeleton. In terms of biological role, tubulin is the major constituent of microtubules, a cylinder consisting of laterally associated linear protofilaments composed of alpha- and beta-tubulin heterodimers. Microtubules grow by the addition of GTP-tubulin dimers to the microtubule end, where a stabilizing cap forms. Below the cap, tubulin dimers are in GDP-bound state, owing to GTPase activity of alpha-tubulin. The chain is Tubulin beta chain from Pseudopleuronectes americanus (Winter flounder).